Reading from the N-terminus, the 233-residue chain is Large ribosomal subunit protein uL1 (233 aa).

It belongs to the universal ribosomal protein uL1 family. Part of the 50S ribosomal subunit.

In terms of biological role, binds directly to 23S rRNA. The L1 stalk is quite mobile in the ribosome, and is involved in E site tRNA release. Functionally, protein L1 is also a translational repressor protein, it controls the translation of the L11 operon by binding to its mRNA. The sequence is that of Large ribosomal subunit protein uL1 from Rhizobium etli (strain CIAT 652).